A 369-amino-acid polypeptide reads, in one-letter code: Deacetylase EF_0837 (369 aa).

Zn(2+) is bound by residues H58, H60, K152, H186, H209, and D270. K152 carries the post-translational modification N6-carboxylysine.

This sequence belongs to the metallo-dependent hydrolases superfamily. Atu3266/EF_0837 deacetylase family. The cofactor is Zn(2+).

In terms of biological role, esterase that can catalyze the deacetylation of acetyl-(R)-mandelate, but with very low efficiency (in vitro). This Enterococcus faecalis (strain ATCC 700802 / V583) protein is Deacetylase EF_0837.